Here is a 441-residue protein sequence, read N- to C-terminus: POC1 centriolar protein homolog A (441 aa).

WD repeat units lie at residues 16–55, 58–97, 100–139, 142–181, 184–223, 226–265, and 268–307; these read GHRD…RAYR, GHKD…ESTA, AHTG…FLFS, QHIN…CIQS, EHGG…LIQH, VHSG…LLYT, and GHQG…GSYP. The disordered stretch occupies residues 347–376; the sequence is DLEPHITEMSVKDRSSPLSYTSRSVDQHHP. Basic and acidic residues predominate over residues 348–361; it reads LEPHITEMSVKDRS. Positions 400 to 427 form a coiled coil; it reads LTRTVGILEQRLSLTEDKLKECIEQQQA.

This sequence belongs to the WD repeat POC1 family. In terms of assembly, interacts with pat.

The protein resides in the cytoplasm. It is found in the cytoskeleton. In terms of biological role, may play an important role in centriole assembly and/or stability and ciliogenesis. The polypeptide is POC1 centriolar protein homolog A (poc1a) (Xenopus laevis (African clawed frog)).